Here is a 969-residue protein sequence, read N- to C-terminus: Leucine--tRNA ligase (969 aa).

The short motif at 46–56 is the 'HIGH' region element; that stretch reads PYLNGVLHAGH. A 'KMSKS' region motif is present at residues 658 to 662; the sequence is KLSKS. Position 661 (Lys-661) interacts with ATP.

Belongs to the class-I aminoacyl-tRNA synthetase family.

The protein resides in the cytoplasm. It catalyses the reaction tRNA(Leu) + L-leucine + ATP = L-leucyl-tRNA(Leu) + AMP + diphosphate. The protein is Leucine--tRNA ligase of Methanococcus aeolicus (strain ATCC BAA-1280 / DSM 17508 / OCM 812 / Nankai-3).